Consider the following 380-residue polypeptide: Alkanesulfonate monooxygenase (380 aa).

Belongs to the SsuD family. Homotetramer.

It catalyses the reaction an alkanesulfonate + FMNH2 + O2 = an aldehyde + FMN + sulfite + H2O + 2 H(+). Catalyzes the desulfonation of aliphatic sulfonates. The protein is Alkanesulfonate monooxygenase of Pectobacterium carotovorum subsp. carotovorum (strain PC1).